A 635-amino-acid chain; its full sequence is Cationic amino acid transporter 4 (635 aa).

The next 3 helical transmembrane spans lie at Leu42 to Val62, Val66 to Ala86, and Leu113 to Val133. N-linked (GlcNAc...) asparagine glycosylation is found at Asn151 and Asn195. A helical membrane pass occupies residues Thr197–Ala217. Asn221 carries an N-linked (GlcNAc...) asparagine glycan. 5 helical membrane passes run Phe229–Val249, Leu270–Leu290, Gly318–Phe338, Gln365–Leu385, and Val391–Val411. Phosphoserine occurs at positions 422 and 427. The chain crosses the membrane as a helical span at residues Val478–Phe498. The N-linked (GlcNAc...) asparagine glycan is linked to Asn500. A run of 3 helical transmembrane segments spans residues Trp508–Leu528, Leu539–Leu559, and Thr567–Ile587. Residue Asn601 is glycosylated (N-linked (GlcNAc...) asparagine).

Belongs to the amino acid-polyamine-organocation (APC) superfamily. Cationic amino acid transporter (CAT) (TC 2.A.3.3) family.

The protein localises to the membrane. Involved in the transport of the cationic amino acids (arginine, lysine and ornithine). The polypeptide is Cationic amino acid transporter 4 (SLC7A4) (Homo sapiens (Human)).